Consider the following 414-residue polypeptide: MATGPVVHPQPVRGDPIDLKNAAAKNRRALGDIGNVDSLIGVEGGKLNRPITRNFRAQLLENAQVAAAANKKAPILDGVTKKQEVVRAVQKKARGDKREPSKPIEVIVISPDTNEVAKAKENKKKVTYSSVLDARSKAASKTLDIDYVDKENDLAAVEYVEDMYIFYKEVVNESKPQMYMHTQPEIDEKMRSILIDWLVEVHVKFDLSPETLYLTVNIIDRFLSLKTVPRRELQLVGVSALLIASKYEEIWPPQVNDLVYVTDNSYNSRQILVMEKTILGNLEWYLTVPTQYVFLVRFIKASGSDQKLENLVHFLAELGLMHHDSLMFCPSMLAASAVYTARCCLNKTPTWTDTLKFHTGYSESQLMDCSKLLAFIHSKAGESKLRGVLKKYSKLGRGAVALISPAKSLMSSAP.

The protein belongs to the cyclin family. Cyclin AB subfamily. In terms of tissue distribution, expressed in roots, stems and flowers.

The protein is Cyclin-B1-3 (CYCB1-3) of Arabidopsis thaliana (Mouse-ear cress).